The primary structure comprises 195 residues: Sec-independent protein translocase protein TatB (195 aa).

The chain crosses the membrane as a helical span at residues 2–22 (FSNVGWGEVLVLLIVALFLIG). Residues 103–125 (VKDTVDTVRKPNLRESLKADKTK) are compositionally biased toward basic and acidic residues. The segment at 103-195 (VKDTVDTVRK…APGYGWEDVT (93 aa)) is disordered. 2 stretches are compositionally biased toward polar residues: residues 127–139 (SAQPQPSLASGSA) and 146–155 (VTQQSNAGES).

This sequence belongs to the TatB family. As to quaternary structure, the Tat system comprises two distinct complexes: a TatABC complex, containing multiple copies of TatA, TatB and TatC subunits, and a separate TatA complex, containing only TatA subunits. Substrates initially bind to the TatABC complex, which probably triggers association of the separate TatA complex to form the active translocon.

The protein resides in the cell membrane. In terms of biological role, part of the twin-arginine translocation (Tat) system that transports large folded proteins containing a characteristic twin-arginine motif in their signal peptide across membranes. Together with TatC, TatB is part of a receptor directly interacting with Tat signal peptides. TatB may form an oligomeric binding site that transiently accommodates folded Tat precursor proteins before their translocation. The protein is Sec-independent protein translocase protein TatB of Corynebacterium jeikeium (strain K411).